A 245-amino-acid chain; its full sequence is 4-hydroxy-tetrahydrodipicolinate reductase (245 aa).

Residues 7–12, 75–77, and 102–105 contribute to the NAD(+) site; these read GAKGKV, GTT, and APNF. H132 (proton donor/acceptor) is an active-site residue. H133 is a (S)-2,3,4,5-tetrahydrodipicolinate binding site. Catalysis depends on K136, which acts as the Proton donor. 142-143 provides a ligand contact to (S)-2,3,4,5-tetrahydrodipicolinate; that stretch reads GT.

This sequence belongs to the DapB family.

Its subcellular location is the cytoplasm. The enzyme catalyses (S)-2,3,4,5-tetrahydrodipicolinate + NAD(+) + H2O = (2S,4S)-4-hydroxy-2,3,4,5-tetrahydrodipicolinate + NADH + H(+). It catalyses the reaction (S)-2,3,4,5-tetrahydrodipicolinate + NADP(+) + H2O = (2S,4S)-4-hydroxy-2,3,4,5-tetrahydrodipicolinate + NADPH + H(+). It participates in amino-acid biosynthesis; L-lysine biosynthesis via DAP pathway; (S)-tetrahydrodipicolinate from L-aspartate: step 4/4. Its function is as follows. Catalyzes the conversion of 4-hydroxy-tetrahydrodipicolinate (HTPA) to tetrahydrodipicolinate. The chain is 4-hydroxy-tetrahydrodipicolinate reductase from Mycobacterium sp. (strain KMS).